Reading from the N-terminus, the 238-residue chain is Uridylate kinase (238 aa).

Position 12–15 (Lys12–Gly15) interacts with ATP. Position 54 (Gly54) interacts with UMP. ATP contacts are provided by Gly55 and Arg59. UMP contacts are provided by residues Asp74 and Thr135–Thr142. Thr162, Tyr168, and Asp171 together coordinate ATP.

It belongs to the UMP kinase family. In terms of assembly, homohexamer.

It localises to the cytoplasm. It catalyses the reaction UMP + ATP = UDP + ADP. It participates in pyrimidine metabolism; CTP biosynthesis via de novo pathway; UDP from UMP (UMPK route): step 1/1. With respect to regulation, inhibited by UTP. Its function is as follows. Catalyzes the reversible phosphorylation of UMP to UDP. The protein is Uridylate kinase of Bordetella avium (strain 197N).